A 219-amino-acid polypeptide reads, in one-letter code: PRELI domain-containing protein 1, mitochondrial (219 aa).

In terms of domain architecture, PRELI/MSF1 spans 36 to 174; it reads TEDIVHREVT…ILAKLQGEAP (139 aa).

Forms a complex with TRIAP1 in the mitochondrion intermembrane space. Interacts with OPA1 and AIFM1.

The protein localises to the mitochondrion. Its subcellular location is the mitochondrion intermembrane space. The enzyme catalyses a 1,2-diacyl-sn-glycero-3-phosphate(in) = a 1,2-diacyl-sn-glycero-3-phosphate(out). In terms of biological role, involved in the modulation of the mitochondrial apoptotic pathway by ensuring the accumulation of cardiolipin (CL) in mitochondrial membranes. In vitro, the TRIAP1:PRELID1 complex mediates the transfer of phosphatidic acid (PA) between liposomes and probably functions as a PA transporter across the mitochondrion intermembrane space to provide PA for CL synthesis in the inner membrane. Regulates the mitochondrial apoptotic pathway in primary Th cells. Regulates Th cell differentiation by down-regulating STAT6 thereby reducing IL-4-induced Th2 cell number. May be important for the development of vital and immunocompetent organs. The sequence is that of PRELI domain-containing protein 1, mitochondrial (PRELID1) from Bos taurus (Bovine).